A 469-amino-acid chain; its full sequence is Siroheme synthase (469 aa).

Residues 1-211 (MSTQLQTWDF…GRTDKARAML (211 aa)) form a precorrin-2 dehydrogenase /sirohydrochlorin ferrochelatase region. Residues 29–30 (EQ) and 50–51 (DP) each bind NAD(+). At serine 136 the chain carries Phosphoserine. Positions 227-469 (GEVYLVGAGP…TLRDRLRWMD (243 aa)) are uroporphyrinogen-III C-methyltransferase. Proline 236 contributes to the S-adenosyl-L-methionine binding site. Residue aspartate 259 is the Proton acceptor of the active site. Residue lysine 281 is the Proton donor of the active site. Residues 312 to 314 (GGD), isoleucine 317, 342 to 343 (TA), methionine 394, and glycine 423 each bind S-adenosyl-L-methionine.

This sequence in the N-terminal section; belongs to the precorrin-2 dehydrogenase / sirohydrochlorin ferrochelatase family. In the C-terminal section; belongs to the precorrin methyltransferase family.

The enzyme catalyses uroporphyrinogen III + 2 S-adenosyl-L-methionine = precorrin-2 + 2 S-adenosyl-L-homocysteine + H(+). It carries out the reaction precorrin-2 + NAD(+) = sirohydrochlorin + NADH + 2 H(+). It catalyses the reaction siroheme + 2 H(+) = sirohydrochlorin + Fe(2+). It functions in the pathway cofactor biosynthesis; adenosylcobalamin biosynthesis; precorrin-2 from uroporphyrinogen III: step 1/1. Its pathway is cofactor biosynthesis; adenosylcobalamin biosynthesis; sirohydrochlorin from precorrin-2: step 1/1. It participates in porphyrin-containing compound metabolism; siroheme biosynthesis; precorrin-2 from uroporphyrinogen III: step 1/1. The protein operates within porphyrin-containing compound metabolism; siroheme biosynthesis; siroheme from sirohydrochlorin: step 1/1. It functions in the pathway porphyrin-containing compound metabolism; siroheme biosynthesis; sirohydrochlorin from precorrin-2: step 1/1. Functionally, multifunctional enzyme that catalyzes the SAM-dependent methylations of uroporphyrinogen III at position C-2 and C-7 to form precorrin-2 via precorrin-1. Then it catalyzes the NAD-dependent ring dehydrogenation of precorrin-2 to yield sirohydrochlorin. Finally, it catalyzes the ferrochelation of sirohydrochlorin to yield siroheme. In Hahella chejuensis (strain KCTC 2396), this protein is Siroheme synthase.